The sequence spans 214 residues: Pyridoxine/pyridoxamine 5'-phosphate oxidase (214 aa).

Substrate is bound by residues 8-11 (RINY) and lysine 66. Residues 61–66 (RIVLVK), 76–77 (FT), arginine 82, lysine 83, and glutamine 105 contribute to the FMN site. Residues tyrosine 123, arginine 127, and serine 131 each coordinate substrate. FMN contacts are provided by residues 140–141 (QS) and tryptophan 184. 190-192 (RLH) is a substrate binding site. Position 194 (arginine 194) interacts with FMN.

It belongs to the pyridoxamine 5'-phosphate oxidase family. Homodimer. The cofactor is FMN.

It catalyses the reaction pyridoxamine 5'-phosphate + O2 + H2O = pyridoxal 5'-phosphate + H2O2 + NH4(+). The catalysed reaction is pyridoxine 5'-phosphate + O2 = pyridoxal 5'-phosphate + H2O2. It participates in cofactor metabolism; pyridoxal 5'-phosphate salvage; pyridoxal 5'-phosphate from pyridoxamine 5'-phosphate: step 1/1. It functions in the pathway cofactor metabolism; pyridoxal 5'-phosphate salvage; pyridoxal 5'-phosphate from pyridoxine 5'-phosphate: step 1/1. In terms of biological role, catalyzes the oxidation of either pyridoxine 5'-phosphate (PNP) or pyridoxamine 5'-phosphate (PMP) into pyridoxal 5'-phosphate (PLP). This Burkholderia multivorans (strain ATCC 17616 / 249) protein is Pyridoxine/pyridoxamine 5'-phosphate oxidase.